We begin with the raw amino-acid sequence, 103 residues long: UPF0145 protein BCE_1095 (103 aa).

Belongs to the UPF0145 family.

The chain is UPF0145 protein BCE_1095 from Bacillus cereus (strain ATCC 10987 / NRS 248).